A 489-amino-acid polypeptide reads, in one-letter code: MSELRETRLEKANALKEQGQEPYALRFDLTDRMARLQADHADLAKGAERDLKVSVAGRVMTRRVMGKLAFFTLADETGTIQLFLEKATLGDSFAQLSSLVDAGDLIGVHGILRRTDRGELSVKVSKWEMLTKSLQPLPDKWHGLADVEKRYRQRYLDLIVTPQSRETFRRRAMAVSAIRRWLDERDFLEIETPVLQSEAGGAEARPFITHHNTLDLPLYLRIATELHLKRLVVGGFERVYELGRIFRNEGVSTRHNPEFTSVEVYQAYADYNDMMTLTEQLIASVCEQVCGTTRISYQGVEVDLTPSWRRATMHELVQEATGLDFTSFETREAAVEAMRAANLPAPDKADTVGRLLNEAFEHAVEPNLIQPTFVLDYPQEISPLARKHRSKPGLVERFELFIVGRETANAFSELTDPLDQRGRMELQQERRAAGDVEASGVDEDFIQALEVGMPPTGGLGIGIDRLVMLLTDSPSIRDVIAFPLMRPEG.

The Mg(2+) site is built by Glu399 and Glu406.

Belongs to the class-II aminoacyl-tRNA synthetase family. Homodimer. Mg(2+) is required as a cofactor.

The protein localises to the cytoplasm. The catalysed reaction is tRNA(Lys) + L-lysine + ATP = L-lysyl-tRNA(Lys) + AMP + diphosphate. The sequence is that of Lysine--tRNA ligase from Synechococcus sp. (strain CC9311).